Reading from the N-terminus, the 90-residue chain is MSKGTASFGKKNKRNTEMCRRCGRQSYHKQKNSCSSCGYPNPKMRNPGSIKARRRRTIGTGRMRYMKRELRAAKNGHKGDPILRTLWAKN.

Zn(2+) is bound by residues C19, C22, C34, and C37. Residues 19–37 form a C4-type zinc finger; it reads CRRCGRQSYHKQKNSCSSC. Positions 21–31 are enriched in basic residues; sequence RCGRQSYHKQK. The tract at residues 21–59 is disordered; that stretch reads RCGRQSYHKQKNSCSSCGYPNPKMRNPGSIKARRRRTIG.

This sequence belongs to the eukaryotic ribosomal protein eL37 family. Requires Zn(2+) as cofactor.

In terms of biological role, binds to the 23S rRNA. This is Large ribosomal subunit protein eL37 (RPL37) from Encephalitozoon cuniculi (strain GB-M1) (Microsporidian parasite).